The chain runs to 895 residues: MKKVFGQTVRDLKREVNKKVLKVPGVEQKVLDATSNEPWGPHGSLLADLAQASRNYHEYQLIMVVIWKRLSDTGKNWRHVYKALTVLEYMVGHGSERVIDEIRERAYQISTLSDFQYIDSGGRDQGSNVRKKSQSLVALVNDKERIAEVRQKAAANRDKYRSSAPGGMYKPSGGYGDKYDYGSRDEERSSYGREREYGYRDDDRNSRDGDRHSRDSEDRYGRDGNRDDDYRGRSRSVDNYGSRGRSSEREREDDGHSSSRGSGARADDNSQDGRGGLQRKFSEQNIGAPPSYEEAVSDSRSPVYSERDGGETPQVTAPGAASPPPPQVAAPEAASPPTGTNTANTTATFVNESPSQKVETFDEFDPRSAFSAGPPAYASTDGVTAPPTVTSMSAPTTSNSVEMDLLGSLADVFSSNALAIVPADSIYVETNGQANAGPAPSFSTSQPSTQSFDDPFGDSPFKAFTSTDTDSTPQQNFGASFQPPPPAFTSEVSHPDTAHNFGFGDSFSAVANPDPASQNVQPPSNSPGFPQEQFATSQSGIDILAGILPPSGPPVQSGPSIPTSQFPPSGNNMYEGFHSQPPVSTAPNLPGQTPFGQAVQPYNMVPHSQNMTGAMPFNSGGFMHQPGSQTPYSTPSGPAGQFMAHQGHGMPPSHGPQRTQSGPVTLQGNNNVMGDMFSQATPNSLTSSSSHPDLTPLTGAIEIVPPPQKKFEPKSSVWADTLSRGLVNFNISGSKTNPLADIGVDFEAINRREKRLEKQTNTPATSTINMGKAMGSGTGLGRSGATAMRPPPNPMTGSGMPMGGGMGVGSYGGMNQNQPMGMGMGAGMNQNQPMGMGMGPGMNMNMNMGGYGQGYPMQPQNPGMVPSPNMPGNNYNPMMGQGGYNPQQSYGGGYR.

Residues 18–150 (KKVLKVPGVE…NDKERIAEVR (133 aa)) enclose the ENTH domain. 3 stretches are compositionally biased toward basic and acidic residues: residues 150–161 (RQKAAANRDKYR), 177–236 (DKYD…RSRS), and 245–257 (RSSEREREDDGHS). Positions 150–396 (RQKAAANRDK…PTVTSMSAPT (247 aa)) are disordered. A phosphoserine mark is found at Ser270 and Ser282. Positions 329 to 348 (AAPEAASPPTGTNTANTTAT) are enriched in low complexity. 2 stretches are compositionally biased toward polar residues: residues 349 to 358 (FVNESPSQKV) and 387 to 396 (PTVTSMSAPT). A Clathrin binding motif is present at residues 409 to 413 (LADVF). Disordered regions lie at residues 436-533 (AGPA…PQEQ) and 758-784 (KQTNTPATSTINMGKAMGSGTGLGRSG). Positions 440 to 454 (PSFSTSQPSTQSFDD) are enriched in low complexity. The short motif at 454–456 (DPF) is the ALPHA-ADR binding element. 3 stretches are compositionally biased toward polar residues: residues 464–479 (FTSTDTDSTPQQNFGA), 515–533 (PASQNVQPPSNSPGFPQEQ), and 759–769 (QTNTPATSTIN).

Belongs to the epsin family. Interacts with clathrin, VTI12, DELTA-ADR and ALPHA-ADR.

Its subcellular location is the golgi apparatus. It localises to the cytoplasmic vesicle. The protein resides in the clathrin-coated vesicle. May have a role in transport via clathrin-coated vesicles from the trans-Golgi network to endosomes. Stimulates clathrin assembly. Binds to membranes enriched in phosphatidylinositol 3-phosphate (PtdIns(3)P). Plays an important role in protein trafficking. The sequence is that of Clathrin interactor EPSIN 2 (EPSIN2) from Arabidopsis thaliana (Mouse-ear cress).